We begin with the raw amino-acid sequence, 166 residues long: Endoribonuclease YbeY (166 aa).

Positions 132, 136, and 142 each coordinate Zn(2+).

This sequence belongs to the endoribonuclease YbeY family. Zn(2+) is required as a cofactor.

The protein localises to the cytoplasm. Its function is as follows. Single strand-specific metallo-endoribonuclease involved in late-stage 70S ribosome quality control and in maturation of the 3' terminus of the 16S rRNA. This Clostridium acetobutylicum (strain ATCC 824 / DSM 792 / JCM 1419 / IAM 19013 / LMG 5710 / NBRC 13948 / NRRL B-527 / VKM B-1787 / 2291 / W) protein is Endoribonuclease YbeY.